Consider the following 178-residue polypeptide: Endothelin-2 (178 aa).

Residues 1–24 (MVSVPTTWCSVALALLVALHEGKG) form the signal peptide. Positions 25-46 (QAAATLEQPASSSHAQGTHLRL) are excised as a propeptide. Disulfide bonds link Cys49–Cys63 and Cys51–Cys59. Residues 70-178 (VNTPEQTAPY…RSTHSRWRKR (109 aa)) constitute a propeptide that is removed on maturation. Residues 96 to 111 (CQCSSARDPACATFCL) are endothelin-like. Residues 159-178 (KRQQEAMREPRSTHSRWRKR) are disordered. The span at 160 to 170 (RQQEAMREPRS) shows a compositional bias: basic and acidic residues.

The protein belongs to the endothelin/sarafotoxin family. In terms of tissue distribution, expressed in lung, but not in placental stem villi vessels or cultured placental villi smooth muscle cells.

It is found in the secreted. Endothelins are endothelium-derived vasoconstrictor peptides. The polypeptide is Endothelin-2 (EDN2) (Homo sapiens (Human)).